A 134-amino-acid polypeptide reads, in one-letter code: S-adenosylmethionine decarboxylase proenzyme (134 aa).

The Schiff-base intermediate with substrate; via pyruvic acid role is filled by Ser-64. Residue Ser-64 is modified to Pyruvic acid (Ser); by autocatalysis. His-69 acts as the Proton acceptor; for processing activity in catalysis. Cys-84 (proton donor; for catalytic activity) is an active-site residue.

Belongs to the prokaryotic AdoMetDC family. Type 1 subfamily. As to quaternary structure, heterotetramer of two alpha and two beta chains arranged as a dimer of alpha/beta heterodimers. It depends on pyruvate as a cofactor. Post-translationally, is synthesized initially as an inactive proenzyme. Formation of the active enzyme involves a self-maturation process in which the active site pyruvoyl group is generated from an internal serine residue via an autocatalytic post-translational modification. Two non-identical subunits are generated from the proenzyme in this reaction, and the pyruvate is formed at the N-terminus of the alpha chain, which is derived from the carboxyl end of the proenzyme. The post-translation cleavage follows an unusual pathway, termed non-hydrolytic serinolysis, in which the side chain hydroxyl group of the serine supplies its oxygen atom to form the C-terminus of the beta chain, while the remainder of the serine residue undergoes an oxidative deamination to produce ammonia and the pyruvoyl group blocking the N-terminus of the alpha chain.

It carries out the reaction S-adenosyl-L-methionine + H(+) = S-adenosyl 3-(methylsulfanyl)propylamine + CO2. The protein operates within amine and polyamine biosynthesis; S-adenosylmethioninamine biosynthesis; S-adenosylmethioninamine from S-adenosyl-L-methionine: step 1/1. Its function is as follows. Catalyzes the decarboxylation of S-adenosylmethionine to S-adenosylmethioninamine (dcAdoMet), the propylamine donor required for the synthesis of the polyamines spermine and spermidine from the diamine putrescine. The sequence is that of S-adenosylmethionine decarboxylase proenzyme from Hydrogenobaculum sp. (strain Y04AAS1).